The primary structure comprises 111 residues: Phosphoribosyl-ATP pyrophosphatase (111 aa).

This sequence belongs to the PRA-PH family.

The protein resides in the cytoplasm. The catalysed reaction is 1-(5-phospho-beta-D-ribosyl)-ATP + H2O = 1-(5-phospho-beta-D-ribosyl)-5'-AMP + diphosphate + H(+). It functions in the pathway amino-acid biosynthesis; L-histidine biosynthesis; L-histidine from 5-phospho-alpha-D-ribose 1-diphosphate: step 2/9. The polypeptide is Phosphoribosyl-ATP pyrophosphatase (Pseudomonas putida (strain W619)).